We begin with the raw amino-acid sequence, 230 residues long: Orotidine 5'-phosphate decarboxylase (230 aa).

Substrate contacts are provided by residues Asp12, Lys34, 61–70 (DMKLLDIDNT), Thr116, Arg177, Gln186, and Arg207. Lys63 acts as the Proton donor in catalysis.

The protein belongs to the OMP decarboxylase family. Type 1 subfamily. Homodimer.

The enzyme catalyses orotidine 5'-phosphate + H(+) = UMP + CO2. It functions in the pathway pyrimidine metabolism; UMP biosynthesis via de novo pathway; UMP from orotate: step 2/2. In terms of biological role, catalyzes the decarboxylation of orotidine 5'-monophosphate (OMP) to uridine 5'-monophosphate (UMP). In Rhizobium rhizogenes (strain K84 / ATCC BAA-868) (Agrobacterium radiobacter), this protein is Orotidine 5'-phosphate decarboxylase.